The primary structure comprises 806 residues: Leucine--tRNA ligase (806 aa).

A 'HIGH' region motif is present at residues 38-48; it reads PYPSGEIHMGH. The 'KMSKS' region signature appears at 572 to 576; sequence KMSKS. Lys-575 provides a ligand contact to ATP.

The protein belongs to the class-I aminoacyl-tRNA synthetase family.

Its subcellular location is the cytoplasm. The enzyme catalyses tRNA(Leu) + L-leucine + ATP = L-leucyl-tRNA(Leu) + AMP + diphosphate. The polypeptide is Leucine--tRNA ligase (Helicobacter acinonychis (strain Sheeba)).